The sequence spans 359 residues: Protein-L-isoaspartate O-methyltransferase domain-containing protein 2 (359 aa).

A lipid anchor (N-myristoyl glycine) is attached at glycine 2. Residue serine 64 is part of the active site. 3 adoMet binding motif regions span residues 85-94, 160-164, and 181-191; these read LNLGSGTGYL, YDRVY, and LKVGGILVMPL. The tract at residues 240–250 is BC-box; that stretch reads VRSLQDLARLA. The disordered stretch occupies residues 301 to 328; that stretch reads SNPSDDTSCEDAEEDRREVAERTLQETK. Positions 314 to 328 are enriched in basic and acidic residues; sequence EDRREVAERTLQETK. The CUL-box stretch occupies residues 343–346; it reads LPLP.

This sequence belongs to the methyltransferase superfamily. L-isoaspartyl/D-aspartyl protein methyltransferase family.

It is found in the cytoplasm. Functionally, may act as a substrate recognition component of an ECS (Elongin BC-CUL5-SOCS-box protein) E3 ubiquitin ligase complex which mediates the ubiquitination and subsequent proteasomal degradation of target proteins. May bind to the methyltransferase cofactor S-adenosylmethionine (AdoMet) via the N-terminal AdoMet binding motif, but probably does not display methyltransferase activity. The protein is Protein-L-isoaspartate O-methyltransferase domain-containing protein 2 (Pcmtd2) of Mus musculus (Mouse).